A 496-amino-acid polypeptide reads, in one-letter code: Angiopoietin-2 (496 aa).

The first 18 residues, 1–18 (MWQLVFLTLSCDLAVATA), serve as a signal peptide directing secretion. N-linked (GlcNAc...) asparagine glycosylation is found at Asn-90, Asn-120, Asn-134, Asn-152, Asn-241, and Asn-304. Residues 167-249 (STNKLEKQIL…VNNSVLQKQQ (83 aa)) are a coiled coil. The 221-residue stretch at 275-495 (KDEQIIFRDC…ATTMMIRPAD (221 aa)) folds into the Fibrinogen C-terminal domain. A disulfide bridge connects residues Cys-284 and Cys-313. 4 residues coordinate Ca(2+): Asp-429, Asp-431, Cys-433, and Cys-435. 2 disulfide bridges follow: Cys-433–Cys-435 and Cys-437–Cys-450.

As to quaternary structure, interacts with TEK/TIE2, competing for the same binding site as ANGPT1. Interacts with ITGA5. Interacts with SVEP1/polydom. Interacts with THBD; this interaction significantly inhibits the generation of activated PC and TAFIa/CPB2 by the thrombin/thrombomodulin complex.

The protein localises to the secreted. Its function is as follows. Binds to TEK/TIE2, competing for the ANGPT1 binding site, and modulating ANGPT1 signaling. Can induce tyrosine phosphorylation of TEK/TIE2 in the absence of ANGPT1. In the absence of angiogenic inducers, such as VEGF, ANGPT2-mediated loosening of cell-matrix contacts may induce endothelial cell apoptosis with consequent vascular regression. In concert with VEGF, it may facilitate endothelial cell migration and proliferation, thus serving as a permissive angiogenic signal. Involved in the regulation of lymphangiogenesis. The sequence is that of Angiopoietin-2 (ANGPT2) from Bos taurus (Bovine).